The chain runs to 212 residues: Cell division protein YtfB (212 aa).

A helical transmembrane segment spans residues 34-50; it reads GIIIAAIVLVVGFLLPS. The tract at residues 88 to 127 is disordered; that stretch reads NDPDQVAPVAPEPIQEGQPEEQPQTTQTQPFQPDSGIDNQ. Positions 99–120 are enriched in low complexity; sequence EPIQEGQPEEQPQTTQTQPFQP. The segment at 117–212 is oapA; the sequence is PFQPDSGIDN…QPDGSFIRAR (96 aa).

The protein belongs to the OapA family.

The protein localises to the cell inner membrane. Cell division protein whose function is related to the generation of a transient cell wall structure. Function is linked to the late stages of cell division. This Escherichia coli (strain K12) protein is Cell division protein YtfB (ytfB).